The following is a 176-amino-acid chain: 3-hydroxyanthranilate 3,4-dioxygenase (176 aa).

Arg44 provides a ligand contact to O2. Positions 48, 54, and 92 each coordinate Fe cation. Glu54 contacts substrate. 2 residues coordinate substrate: Arg96 and Glu106. Cys121, Cys124, Cys158, and Cys161 together coordinate Fe cation.

This sequence belongs to the 3-HAO family. Homodimer. It depends on Fe(2+) as a cofactor.

It catalyses the reaction 3-hydroxyanthranilate + O2 = (2Z,4Z)-2-amino-3-carboxymuconate 6-semialdehyde. The protein operates within cofactor biosynthesis; NAD(+) biosynthesis; quinolinate from L-kynurenine: step 3/3. Functionally, catalyzes the oxidative ring opening of 3-hydroxyanthranilate to 2-amino-3-carboxymuconate semialdehyde, which spontaneously cyclizes to quinolinate. This Xanthomonas campestris pv. campestris (strain B100) protein is 3-hydroxyanthranilate 3,4-dioxygenase.